Reading from the N-terminus, the 967-residue chain is Isoleucine--tRNA ligase (967 aa).

The short motif at 68–78 (PYANGTLHMGH) is the 'HIGH' region element. Glu-583 is an L-isoleucyl-5'-AMP binding site. The short motif at 624–628 (KMSKS) is the 'KMSKS' region element. Lys-627 lines the ATP pocket. Positions 937, 940, 957, and 960 each coordinate Zn(2+).

It belongs to the class-I aminoacyl-tRNA synthetase family. IleS type 1 subfamily. Monomer. It depends on Zn(2+) as a cofactor.

The protein localises to the cytoplasm. It catalyses the reaction tRNA(Ile) + L-isoleucine + ATP = L-isoleucyl-tRNA(Ile) + AMP + diphosphate. Catalyzes the attachment of isoleucine to tRNA(Ile). As IleRS can inadvertently accommodate and process structurally similar amino acids such as valine, to avoid such errors it has two additional distinct tRNA(Ile)-dependent editing activities. One activity is designated as 'pretransfer' editing and involves the hydrolysis of activated Val-AMP. The other activity is designated 'posttransfer' editing and involves deacylation of mischarged Val-tRNA(Ile). The protein is Isoleucine--tRNA ligase of Prochlorococcus marinus (strain NATL1A).